The chain runs to 273 residues: Glutamate racemase (273 aa).

Residues aspartate 7 to serine 8 and tyrosine 39 to glycine 40 each bind substrate. Cysteine 70 (proton donor/acceptor) is an active-site residue. Asparagine 71–threonine 72 provides a ligand contact to substrate. The active-site Proton donor/acceptor is the cysteine 194. Threonine 195–histidine 196 provides a ligand contact to substrate.

Belongs to the aspartate/glutamate racemases family.

It catalyses the reaction L-glutamate = D-glutamate. It participates in cell wall biogenesis; peptidoglycan biosynthesis. Its function is as follows. Provides the (R)-glutamate required for cell wall biosynthesis. This Dinoroseobacter shibae (strain DSM 16493 / NCIMB 14021 / DFL 12) protein is Glutamate racemase.